Here is a 395-residue protein sequence, read N- to C-terminus: Phosphoglycerate kinase (395 aa).

Substrate is bound by residues 20–22, Arg35, 58–61, Arg117, and Arg150; these read DLN and HFGR. Residues Lys200, Glu322, and 352 to 355 contribute to the ATP site; that span reads GGDT.

The protein belongs to the phosphoglycerate kinase family. In terms of assembly, monomer.

Its subcellular location is the cytoplasm. It catalyses the reaction (2R)-3-phosphoglycerate + ATP = (2R)-3-phospho-glyceroyl phosphate + ADP. Its pathway is carbohydrate degradation; glycolysis; pyruvate from D-glyceraldehyde 3-phosphate: step 2/5. This Brucella suis biovar 1 (strain 1330) protein is Phosphoglycerate kinase.